Here is a 600-residue protein sequence, read N- to C-terminus: DNA polymerase alpha subunit B (600 aa).

Residues 112 to 167 (AYTTPSKGPHKRVSSTPETPLTKRSISTRSPHQLLSPSSFSPSATPSQKYSSRTNR) are disordered. Residues 125-140 (SSTPETPLTKRSISTR) show a composition bias toward polar residues. Phosphoserine is present on Ser126. Phosphothreonine is present on residues Thr127 and Thr130. Phosphoserine occurs at positions 141, 147, 152, and 154. A compositionally biased stretch (low complexity) spans 141–158 (SPHQLLSPSSFSPSATPS).

The protein belongs to the DNA polymerase alpha subunit B family. Component of the alpha DNA polymerase complex (also known as the alpha DNA polymerase-primase complex) consisting of four subunits: the catalytic subunit POLA1, the regulatory subunit POLA2, and the primase complex subunits PRIM1 and PRIM2 respectively. Within the complex, POLA1 directly interacts with PRIM2. Phosphorylated in a cell cycle-dependent manner, in G2/M phase.

The protein localises to the nucleus. Accessory subunit of the DNA polymerase alpha complex (also known as the alpha DNA polymerase-primase complex) which plays an essential role in the initiation of DNA synthesis. During the S phase of the cell cycle, the DNA polymerase alpha complex (composed of a catalytic subunit POLA1, an accessory subunit POLA2 and two primase subunits, the catalytic subunit PRIM1 and the regulatory subunit PRIM2) is recruited to DNA at the replicative forks via direct interactions with MCM10 and WDHD1. The primase subunit of the polymerase alpha complex initiates DNA synthesis by oligomerising short RNA primers on both leading and lagging strands. These primers are initially extended by the polymerase alpha catalytic subunit and subsequently transferred to polymerase delta and polymerase epsilon for processive synthesis on the lagging and leading strand, respectively. The chain is DNA polymerase alpha subunit B (Pola2) from Rattus norvegicus (Rat).